The following is a 960-amino-acid chain: RNA polymerase II subunit A C-terminal domain phosphatase (960 aa).

M1 is subject to N-acetylmethionine. In terms of domain architecture, FCP1 homology spans 178-341 (HRNRKLVLMV…PPAARETQAR (164 aa)). The segment at 331-580 (APPAARETQA…EEDTDDDDHL (250 aa)) is disordered. Residues 439–448 (PGVQPTQGDA) are compositionally biased toward polar residues. The span at 453–463 (LDFDLSSDSES) shows a compositional bias: acidic residues. S530 carries the post-translational modification Phosphoserine. Residues 547–556 (ESQNSEQSGV) show a composition bias toward polar residues. Residues 566–578 (VGEEEEEDTDDDD) are compositionally biased toward acidic residues. The BRCT domain occupies 619 to 718 (LKSKVLADVA…DKVEEQLFPL (100 aa)). A phosphoserine mark is found at S664 and S730. K770 is modified (N6-acetyllysine). 2 disordered regions span residues 770-834 (KLIR…MSEA) and 854-948 (DILG…ADEM). Phosphoserine is present on residues S830, S860, and S863. Acidic residues predominate over residues 854–864 (DILGEGSDDSD). A compositionally biased stretch (basic and acidic residues) spans 865–881 (IEKKKPEDQDNEQERAP). Over residues 934-947 (SNDDEEGSSSEADE) the composition is skewed to acidic residues.

As to quaternary structure, homodimer. Interacts with GTF2F1. Interacts with WDR77, SNRPB and SNRNP70. Post-translationally, phosphorylated. In the presence of TFIIF, the phosphorylated form has an increased CTD phosphatase activity. The phosphorylation is required for the physical interaction with GTF2F1.

The protein localises to the nucleus. It localises to the cytoplasm. The protein resides in the cytoskeleton. It is found in the microtubule organizing center. Its subcellular location is the centrosome. The protein localises to the spindle. It localises to the spindle pole. The protein resides in the midbody. The catalysed reaction is O-phospho-L-seryl-[protein] + H2O = L-seryl-[protein] + phosphate. The enzyme catalyses O-phospho-L-threonyl-[protein] + H2O = L-threonyl-[protein] + phosphate. In terms of biological role, processively dephosphorylates 'Ser-2' and 'Ser-5' of the heptad repeats YSPTSPS in the C-terminal domain of the largest RNA polymerase II subunit. This promotes the activity of RNA polymerase II. Plays a role in the exit from mitosis by dephosphorylating crucial mitotic substrates (USP44, CDC20 and WEE1) that are required for M-phase-promoting factor (MPF)/CDK1 inactivation. This Mus musculus (Mouse) protein is RNA polymerase II subunit A C-terminal domain phosphatase (Ctdp1).